Reading from the N-terminus, the 89-residue chain is Large ribosomal subunit protein bL27 (89 aa).

The disordered stretch occupies residues M1 to L21. Polar residues predominate over residues A7–Q19.

This sequence belongs to the bacterial ribosomal protein bL27 family.

This is Large ribosomal subunit protein bL27 from Frankia alni (strain DSM 45986 / CECT 9034 / ACN14a).